Reading from the N-terminus, the 1589-residue chain is Polyhomeotic-proximal chromatin protein (1589 aa).

The segment covering 1–15 (MDRRALKFMQKRADT) has biased composition (basic and acidic residues). Disordered regions lie at residues 1-85 (MDRR…GGKQ), 107-174 (KYDV…NCNS), 252-290 (LQQQ…STAI), 1112-1244 (LSTA…STTT), and 1260-1294 (AVST…NGSK). Low complexity-rich tracts occupy residues 18 to 28 (DTTTPVSTTAS), 60 to 80 (NHNN…QQQQ), and 119 to 139 (AQQQ…VTPT). The segment covering 154 to 174 (HTPSTPNRPSAPSTPNTNCNS) has biased composition (polar residues). Residues 260–271 (NGGGAASAGAGG) show a composition bias toward gly residues. Residues 272 to 285 (AASPANSQQSQQQQ) show a composition bias toward low complexity. The residue at position 1145 (Ser-1145) is a Phosphoserine. Position 1148 is a phosphothreonine (Thr-1148). The span at 1157–1180 (TTPKSSTPATVSASVEASSSTGEA) shows a compositional bias: low complexity. The segment covering 1189–1221 (RSSTPSKGATTPTSKQSNAAVQPPSSTTPNSVS) has biased composition (polar residues). Low complexity-rich tracts occupy residues 1230–1244 (TCGS…STTT) and 1260–1290 (AVST…SSIS). The FCS-type zinc finger occupies 1356-1389 (SAPGSDMVACEQCGKMEHKAKLKRKRYCSPGCSR). 4 residues coordinate Zn(2+): Cys-1365, Cys-1368, Cys-1383, and Cys-1387. The region spanning 1513–1577 (WSVDDVSNFI…VAKVESIKEV (65 aa)) is the SAM domain.

Component of PRC1 complex, which contains many PcG proteins like Pc, ph, Scm, Psc, Sce and also chromatin-remodeling proteins such as histone deacetylases. This complex is distinct from the Esc/E(z) complex, at least composed of esc, E(z), Su(z)12, HDAC1/Rpd3 and Caf1-55. The 2 complexes however cooperate and interact together during the first 3 hours of development to establish PcG silencing. Interacts with the SAM domain of Scm via its SAM domain in vitro. Interacts with Trl in vivo and with corto in vitro. In terms of tissue distribution, salivary glands.

It localises to the nucleus. Polycomb group (PcG) protein. PcG proteins act by forming multiprotein complexes, which are required to maintain the transcriptionally repressive state of homeotic genes throughout development. PcG proteins are not required to initiate repression, but to maintain it during later stages of development. Component of the PcG multiprotein PRC1 complex, a complex that acts via chromatin remodeling and modification of histones; it mediates monoubiquitination of histone H2A 'Lys-118', rendering chromatin heritably changed in its expressibility. Plays a role in regulating the expression of other pair-rule genes such as eve, ftz, and H. In Drosophila melanogaster (Fruit fly), this protein is Polyhomeotic-proximal chromatin protein (ph-p).